Consider the following 234-residue polypeptide: (5-formylfuran-3-yl)methyl phosphate synthase (234 aa).

K27 acts as the Schiff-base intermediate with substrate in catalysis. K85 acts as the Proton acceptor in catalysis.

It belongs to the MfnB family.

The enzyme catalyses 2 D-glyceraldehyde 3-phosphate = 4-(hydroxymethyl)-2-furancarboxaldehyde phosphate + phosphate + 2 H2O. It functions in the pathway cofactor biosynthesis; methanofuran biosynthesis. Catalyzes the formation of 4-(hydroxymethyl)-2-furancarboxaldehyde phosphate (4-HFC-P) from two molecules of glyceraldehyde-3-P (GA-3-P). The sequence is that of (5-formylfuran-3-yl)methyl phosphate synthase from Methanosarcina acetivorans (strain ATCC 35395 / DSM 2834 / JCM 12185 / C2A).